The primary structure comprises 117 residues: Large ribosomal subunit protein bL20 (117 aa).

This sequence belongs to the bacterial ribosomal protein bL20 family.

Functionally, binds directly to 23S ribosomal RNA and is necessary for the in vitro assembly process of the 50S ribosomal subunit. It is not involved in the protein synthesizing functions of that subunit. This chain is Large ribosomal subunit protein bL20, found in Histophilus somni (strain 129Pt) (Haemophilus somnus).